The sequence spans 400 residues: Peroxisome biogenesis factor 16 (400 aa).

The tract at residues 176-226 (QKQFQNKRPAVTMSINNNNNINNNDNNNINNNNNTNDDNFNNNNNNNNNRR) is disordered. Positions 190 to 224 (INNNNNINNNDNNNINNNNNTNDDNFNNNNNNNNN) are enriched in low complexity.

The protein belongs to the peroxin-16 family.

The protein localises to the cytoplasm. In terms of biological role, required for peroxisome membrane biogenesis. This chain is Peroxisome biogenesis factor 16 (pex16), found in Dictyostelium discoideum (Social amoeba).